Here is a 254-residue protein sequence, read N- to C-terminus: Coiled-coil domain-containing protein 152 (254 aa).

Positions 61 to 246 (SIKEECATLH…LEQRLSVGKD (186 aa)) form a coiled coil.

In terms of tissue distribution, detected in stomach.

The protein is Coiled-coil domain-containing protein 152 (CCDC152) of Homo sapiens (Human).